We begin with the raw amino-acid sequence, 85 residues long: Putative plasmid stability protein y4jJ (85 aa).

The segment covering 66 to 78 (EAEHFNQLRDKTP) has biased composition (basic and acidic residues). Residues 66–85 (EAEHFNQLRDKTPAEPMSFE) are disordered.

To P.syringae pv tomato plasmid stability protein StbC.

Involved in plasmid stability. This chain is Putative plasmid stability protein y4jJ, found in Sinorhizobium fredii (strain NBRC 101917 / NGR234).